The primary structure comprises 245 residues: Bis(5'-nucleosyl)-tetraphosphatase PrpE [asymmetrical] (245 aa).

Belongs to the PrpE family. Ni(2+) serves as cofactor.

The enzyme catalyses P(1),P(4)-bis(5'-guanosyl) tetraphosphate + H2O = GMP + GTP + 2 H(+). Functionally, asymmetrically hydrolyzes Ap4p to yield AMP and ATP. This chain is Bis(5'-nucleosyl)-tetraphosphatase PrpE [asymmetrical], found in Geobacillus sp. (strain WCH70).